The chain runs to 58 residues: Ribosome biogenesis protein Nop10 (58 aa).

It belongs to the NOP10 family.

Its function is as follows. Involved in ribosome biogenesis; more specifically in 18S rRNA pseudouridylation and in cleavage of pre-rRNA. The chain is Ribosome biogenesis protein Nop10 from Thermococcus onnurineus (strain NA1).